The following is a 465-amino-acid chain: Chromosomal replication initiator protein DnaA (465 aa).

A domain I, interacts with DnaA modulators region spans residues 1–87 (MLWTDCLTRL…RPGSILSSSE (87 aa)). The interval 81 to 123 (SILSSSEQPATTTAALQTAPIPQPAKVKREPEPVANTAVSSKS) is disordered. Residues 88–100 (QPATTTAALQTAP) show a composition bias toward low complexity. The tract at residues 88–127 (QPATTTAALQTAPIPQPAKVKREPEPVANTAVSSKSSKKK) is domain II. The tract at residues 128–345 (LLNPQFTFSL…GALNKVVAIS (218 aa)) is domain III, AAA+ region. Residues glycine 173, glycine 175, lysine 176, and threonine 177 each coordinate ATP. Residues 346 to 465 (RFKGAPIDLD…YKNLLRLLQS (120 aa)) form a domain IV, binds dsDNA region.

The protein belongs to the DnaA family. Oligomerizes as a right-handed, spiral filament on DNA at oriC.

Its subcellular location is the cytoplasm. In terms of biological role, plays an essential role in the initiation and regulation of chromosomal replication. ATP-DnaA binds to the origin of replication (oriC) to initiate formation of the DNA replication initiation complex once per cell cycle. Binds the DnaA box (a 9 base pair repeat at the origin) and separates the double-stranded (ds)DNA. Forms a right-handed helical filament on oriC DNA; dsDNA binds to the exterior of the filament while single-stranded (ss)DNA is stabiized in the filament's interior. The ATP-DnaA-oriC complex binds and stabilizes one strand of the AT-rich DNA unwinding element (DUE), permitting loading of DNA polymerase. After initiation quickly degrades to an ADP-DnaA complex that is not apt for DNA replication. Binds acidic phospholipids. This chain is Chromosomal replication initiator protein DnaA, found in Acinetobacter baumannii (strain ATCC 17978 / DSM 105126 / CIP 53.77 / LMG 1025 / NCDC KC755 / 5377).